The sequence spans 622 residues: Low affinity potassium transport system protein Kup (622 aa).

A run of 12 helical transmembrane segments spans residues Ile12–Leu32, Val49–Leu69, Val103–Ile123, Pro137–Ile157, Val165–Leu185, Val213–Ala233, Trp247–Leu267, Pro276–Ala296, Ile337–Phe357, Leu363–Thr383, Phe396–Leu416, and Leu419–Thr439.

The protein belongs to the HAK/KUP transporter (TC 2.A.72) family.

The protein resides in the cell inner membrane. It carries out the reaction K(+)(in) + H(+)(in) = K(+)(out) + H(+)(out). Functionally, responsible for the low-affinity transport of potassium into the cell. Likely operates as a K(+):H(+) symporter. The sequence is that of Low affinity potassium transport system protein Kup from Salmonella gallinarum (strain 287/91 / NCTC 13346).